The sequence spans 391 residues: Multidrug resistance protein MdtL (391 aa).

The next 12 membrane-spanning stretches (helical) occupy residues 4–24, 42–62, 69–89, 93–113, 131–151, 158–178, 203–222, 245–265, 269–289, 293–313, 331–351, and 356–376; these read FLIC…MYLV, IAFS…GKVA, PVAI…SLAE, LFLA…VVAF, LLNG…HLIM, SLFW…LFIL, FFLS…LTFV, ALTA…LGIF, TLMI…AVSP, VSLF…GVAM, LGIA…VVGI, and MLIG…MFVA.

This sequence belongs to the major facilitator superfamily. DHA1 family. MdtL (TC 2.A.1.2.22) subfamily.

The protein localises to the cell inner membrane. Confers resistance to chloramphenicol. The polypeptide is Multidrug resistance protein MdtL (Escherichia coli O17:K52:H18 (strain UMN026 / ExPEC)).